Consider the following 280-residue polypeptide: Large ribosomal subunit protein uL2 (280 aa).

Disordered regions lie at residues 1–25 (MGIR…AEVT) and 230–280 (HPHG…SGRG). Basic residues predominate over residues 257–280 (KTRKRRKPSSKFIIRRRKTASGRG).

It belongs to the universal ribosomal protein uL2 family. In terms of assembly, part of the 50S ribosomal subunit. Forms a bridge to the 30S subunit in the 70S ribosome.

Its function is as follows. One of the primary rRNA binding proteins. Required for association of the 30S and 50S subunits to form the 70S ribosome, for tRNA binding and peptide bond formation. It has been suggested to have peptidyltransferase activity; this is somewhat controversial. Makes several contacts with the 16S rRNA in the 70S ribosome. This is Large ribosomal subunit protein uL2 from Gloeobacter violaceus (strain ATCC 29082 / PCC 7421).